We begin with the raw amino-acid sequence, 266 residues long: Derlin-1 (266 aa).

Topologically, residues methionine 1–threonine 20 are cytoplasmic. Residues leucine 21–leucine 41 form a helical membrane-spanning segment. Residues isoleucine 42–leucine 55 are Lumenal-facing. A helical membrane pass occupies residues isoleucine 56–isoleucine 76. At alanine 77–aspartate 94 the chain is on the cytoplasmic side. Residues phenylalanine 95–phenylalanine 115 traverse the membrane as a helical segment. Residues tryptophan 116–tryptophan 156 lie on the Lumenal side of the membrane. Residues alanine 157 to isoleucine 177 form a helical membrane-spanning segment. The Cytoplasmic portion of the chain corresponds to alanine 178–aspartate 266. The segment at glycine 235–aspartate 266 is disordered.

Belongs to the derlin family.

The protein resides in the endoplasmic reticulum membrane. Functionally, may be involved in the degradation process of specific misfolded endoplasmic reticulum (ER) luminal proteins. In Arabidopsis thaliana (Mouse-ear cress), this protein is Derlin-1 (DER1).